The chain runs to 281 residues: 2-dehydro-3-deoxyphosphooctonate aldolase 1 (281 aa).

This sequence belongs to the KdsA family.

Its subcellular location is the cytoplasm. It carries out the reaction D-arabinose 5-phosphate + phosphoenolpyruvate + H2O = 3-deoxy-alpha-D-manno-2-octulosonate-8-phosphate + phosphate. Its pathway is carbohydrate biosynthesis; 3-deoxy-D-manno-octulosonate biosynthesis; 3-deoxy-D-manno-octulosonate from D-ribulose 5-phosphate: step 2/3. The protein operates within bacterial outer membrane biogenesis; lipopolysaccharide biosynthesis. This Pseudomonas putida (strain ATCC 47054 / DSM 6125 / CFBP 8728 / NCIMB 11950 / KT2440) protein is 2-dehydro-3-deoxyphosphooctonate aldolase 1 (kdsA1).